A 498-amino-acid chain; its full sequence is Galactose-1-phosphate uridylyltransferase (498 aa).

Belongs to the galactose-1-phosphate uridylyltransferase type 2 family.

The protein localises to the cytoplasm. It carries out the reaction alpha-D-galactose 1-phosphate + UDP-alpha-D-glucose = alpha-D-glucose 1-phosphate + UDP-alpha-D-galactose. Its pathway is carbohydrate metabolism; galactose metabolism. This Latilactobacillus sakei subsp. sakei (strain 23K) (Lactobacillus sakei subsp. sakei) protein is Galactose-1-phosphate uridylyltransferase.